We begin with the raw amino-acid sequence, 350 residues long: Chorismate synthase (350 aa).

NADP(+) is bound by residues Arg-39 and Arg-45. The disordered stretch occupies residues Lys-85–Gly-104. FMN contacts are provided by residues Arg-119–Ser-121, Gln-213–Gly-214, Gly-258, Lys-273–Thr-277, and Arg-299.

This sequence belongs to the chorismate synthase family. As to quaternary structure, homotetramer. Requires FMNH2 as cofactor.

It carries out the reaction 5-O-(1-carboxyvinyl)-3-phosphoshikimate = chorismate + phosphate. It functions in the pathway metabolic intermediate biosynthesis; chorismate biosynthesis; chorismate from D-erythrose 4-phosphate and phosphoenolpyruvate: step 7/7. Functionally, catalyzes the anti-1,4-elimination of the C-3 phosphate and the C-6 proR hydrogen from 5-enolpyruvylshikimate-3-phosphate (EPSP) to yield chorismate, which is the branch point compound that serves as the starting substrate for the three terminal pathways of aromatic amino acid biosynthesis. This reaction introduces a second double bond into the aromatic ring system. This is Chorismate synthase from Caldanaerobacter subterraneus subsp. tengcongensis (strain DSM 15242 / JCM 11007 / NBRC 100824 / MB4) (Thermoanaerobacter tengcongensis).